A 461-amino-acid polypeptide reads, in one-letter code: Phosphatidate cytidylyltransferase 1 (461 aa).

The disordered stretch occupies residues 1 to 68 (MLELRHRGGC…PEVPPSSDRT (68 aa)). Arg7 bears the Omega-N-methylarginine mark. A compositionally biased stretch (basic and acidic residues) spans 22 to 56 (REGEAAGGDHETESTSDKETDIDDRYGDLDARGDS). Residues Ser35 and Ser37 each carry the phosphoserine modification. A run of 6 helical transmembrane segments spans residues 96–116 (MISLFFLIIYMGSFMLMLLVL), 149–169 (FLLCVNYFFYGETVADYFATF), 183–203 (HRFISFALYLAGFCMFVLSLV), 230–250 (LVIQNLFEGMIWFLVPISSVI), 279–299 (GFIGGFFSTVIFGFIAAYVLS), and 357–377 (IALSTFASLIGPFGGFFASGF).

It belongs to the CDS family. In terms of assembly, homodimer. Interacts with FOS; this interaction may enhance catalytic activity. The cofactor is Mg(2+). In terms of tissue distribution, expressed in adult brain, eye, smooth muscle and testis. Highly expressed in the inner segment of the photoreceptor layer of adult retina.

It is found in the endoplasmic reticulum membrane. The catalysed reaction is a 1,2-diacyl-sn-glycero-3-phosphate + CTP + H(+) = a CDP-1,2-diacyl-sn-glycerol + diphosphate. It carries out the reaction 1-octadecanoyl-2-(5Z,8Z,11Z,14Z-eicosatetraenoyl)-sn-glycero-3-phosphate + CTP + H(+) = 1-octadecanoyl-2-(5Z,8Z,11Z,14Z-eicosatetraenoyl)-sn-glycero-3-cytidine-5'-diphosphate + diphosphate. It catalyses the reaction 1-octadecanoyl-2-(9Z,12Z-octadecadienoyl)-sn-glycero-3-phosphate + CTP + H(+) = 1-octadecanoyl-2-(9Z,12Z-octadecadienoyl)-sn-glycero-3-cytidine-5'-diphosphate + diphosphate. The enzyme catalyses 1-hexadecanoyl-2-(5Z,8Z,11Z,14Z-eicosatetraenoyl)-sn-glycero-3-phosphate + CTP + H(+) = 1-hexadecanoyl-2-(5Z,8Z,11Z,14Z-eicosatetraenoyl)-sn-glycero-3-cytidine-5'-diphosphate + diphosphate. The catalysed reaction is 1,2-di-(5Z,8Z,11Z,14Z)-eicosatetraenoyl-sn-glycero-3-phosphate + CTP + H(+) = 1,2-di-(5Z,8Z,11Z,14Z-eicosatetraenoyl)-sn-glycero-3-cytidine-5'-diphosphate + diphosphate. It carries out the reaction 1-octadecanoyl-2-(9Z-octadecenoyl)-sn-glycero-3-phosphate + CTP + H(+) = 1-octadecanoyl-2-(9Z-octadecenoyl)-sn-glycero-3-cytidine-5'-diphosphate + diphosphate. It catalyses the reaction 1-octadecanoyl-2-(4Z,7Z,10Z,13Z,16Z,19Z-docosahexaenoyl)-sn-glycero-3-phosphate + CTP + H(+) = 1-octadecanoyl-2-(4Z,7Z,10Z,13Z,16Z,19Z-docosahexaenoyl)-sn-glycero-3-cytidine-5'-diphosphate + diphosphate. The enzyme catalyses 1,2-di-(9Z,12Z-octadecadienoyl)-sn-glycero-3-phosphate + CTP + H(+) = 1,2-di-(9Z,12Z-octadecadienoyl)-sn-glycero-3-cytidine-5'-diphosphate + diphosphate. The catalysed reaction is 1,2-di-(9Z-octadecenoyl)-sn-glycero-3-phosphate + CTP + H(+) = 1,2-di-(9Z-octadecenoyl)-sn-glycero-3-cytidine-5'-diphosphate + diphosphate. It functions in the pathway phospholipid metabolism; CDP-diacylglycerol biosynthesis; CDP-diacylglycerol from sn-glycerol 3-phosphate: step 3/3. Functionally, catalyzes the conversion of phosphatidic acid (PA) to CDP-diacylglycerol (CDP-DAG), an essential intermediate in the synthesis of phosphatidylglycerol, cardiolipin and phosphatidylinositol. Exhibits almost no acyl chain preference for PA, showing no discrimination for the sn-1/sn-2 acyl chain composition of PAs. Plays an important role in regulating the growth of lipid droplets which are storage organelles at the center of lipid and energy homeostasis. Positively regulates the differentiation and development of adipocytes. This Mus musculus (Mouse) protein is Phosphatidate cytidylyltransferase 1.